The primary structure comprises 194 residues: Imidazoleglycerol-phosphate dehydratase (194 aa).

It belongs to the imidazoleglycerol-phosphate dehydratase family.

It is found in the cytoplasm. The catalysed reaction is D-erythro-1-(imidazol-4-yl)glycerol 3-phosphate = 3-(imidazol-4-yl)-2-oxopropyl phosphate + H2O. It participates in amino-acid biosynthesis; L-histidine biosynthesis; L-histidine from 5-phospho-alpha-D-ribose 1-diphosphate: step 6/9. The protein is Imidazoleglycerol-phosphate dehydratase of Bacillus licheniformis (strain ATCC 14580 / DSM 13 / JCM 2505 / CCUG 7422 / NBRC 12200 / NCIMB 9375 / NCTC 10341 / NRRL NRS-1264 / Gibson 46).